A 1610-amino-acid polypeptide reads, in one-letter code: Voltage-dependent L-type calcium channel subunit alpha-1D (1610 aa).

The tract at residues 1–99 (MMMMMMKKMQ…SKKQGNSSNS (99 aa)) is disordered. The Cytoplasmic segment spans residues 1–125 (MMMMMMKKMQ…RACISIVEWK (125 aa)). Over residues 37-51 (GPTSQPNSSKQTVLS) the composition is skewed to polar residues. Over residues 53–66 (QAAIDAARQAKAAQ) the composition is skewed to low complexity. Residues 81–92 (QRKRQQYAKSKK) show a composition bias toward basic residues. One copy of the I repeat lies at 112–408 (NPIRRACISI…LVLGVLSGEF (297 aa)). A helical membrane pass occupies residues 126–144 (PFDIFILLAIFANCVALAI). The Extracellular portion of the chain corresponds to 145 to 162 (YIPFPEDDSNSTNHNLEK). Asn-154 carries N-linked (GlcNAc...) asparagine glycosylation. Residues 163-182 (VEYAFLIIFTVETFLKIIAY) form a helical membrane-spanning segment. Residues 183-194 (GLLLHPNAYVRN) are Cytoplasmic-facing. The chain crosses the membrane as a helical span at residues 195 to 213 (GWNLLDFVIVIVGLFSVIL). The Extracellular segment spans residues 214 to 234 (EQLTKETEGGNHSSGKSGGFD). N-linked (GlcNAc...) asparagine glycosylation is present at Asn-224. Residues 235–253 (VKALRAFRVLRPLRLVSGV) traverse the membrane as a helical segment. Residues 254-272 (PSLQVVLNSIIKAMVPLLH) are Cytoplasmic-facing. Residues 273–292 (IALLVLFVIIIYAIIGLELF) form a helical membrane-spanning segment. The Extracellular portion of the chain corresponds to 293 to 380 (IGKMHKTCFF…WMNDAMGFEL (88 aa)). The N-linked (GlcNAc...) asparagine glycan is linked to Asn-328. Residue Glu-363 participates in Ca(2+) binding. The chain crosses the membrane as a helical span at residues 381–405 (PWVYFVSLVIFGSFFVLNLVLGVLS). The Cytoplasmic segment spans residues 406–522 (GEFSKEREKA…RRCRAAVKSV (117 aa)). The interval 428–445 (EQLEEDLKGYLDWITQAE) is binding to the beta subunit. The interval 448-487 (DPENEEEGGEEGKRNTSMPTSETESVNTENVSGEGETQGS) is disordered. The segment covering 462-487 (NTSMPTSETESVNTENVSGEGETQGS) has biased composition (polar residues). The II repeat unit spans residues 508 to 754 (NRFNRRRCRA…VFLAIAVDNL (247 aa)). A helical membrane pass occupies residues 523 to 542 (TFYWLVIVLVFLNTLTISSE). The Extracellular portion of the chain corresponds to 543-557 (HYNQPDWLTQIQDIA). Residues 558–576 (NKVLLALFTCEMLVKMYSL) traverse the membrane as a helical segment. At 577–584 (GLQAYFVS) the chain is on the cytoplasmic side. A helical membrane pass occupies residues 585-603 (LFNRFDCFVVCGGITETIL). Residues 604-613 (VELELMSPLG) are Extracellular-facing. Residues 614–632 (VSVFRCVRLLRIFKVTRHW) form a helical membrane-spanning segment. The Cytoplasmic portion of the chain corresponds to 633 to 651 (TSLSNLVASLLNSMKSIAS). The helical transmembrane segment at 652-672 (LLLLLFLFIIIFSLLGMQLFG) threads the bilayer. At 673-726 (GKFNFDETQTKRSTFDNFPQALLTVFQILTGEDWNAVMYDGIMAYGGPSSSGMI) the chain is on the extracellular side. Glu-704 provides a ligand contact to Ca(2+). A helical transmembrane segment spans residues 727–751 (VCIYFIILFICGNYILLNVFLAIAV). At 752 to 884 (DNLADAESLN…VGCHKLINHH (133 aa)) the chain is on the cytoplasmic side. A compositionally biased stretch (basic and acidic residues) spans 765–789 (KEEAEEKERKKIARKESLENKKNNK). The disordered stretch occupies residues 765 to 846 (KEEAEEKERK…VPAGPRPRRI (82 aa)). Positions 790 to 801 (PEVNQIANSDNK) are enriched in polar residues. The span at 824–836 (VGEEEEEEEEEPE) shows a compositional bias: acidic residues. The III repeat unit spans residues 871-1153 (NPIRVGCHKL…IFVGFVIVTF (283 aa)). The chain crosses the membrane as a helical span at residues 885-903 (IFTNLILVFIMLSSAALAA). The Extracellular portion of the chain corresponds to 904-919 (EDPIRSHSFRNTILGY). The helical transmembrane segment at 920–939 (FDYAFTAIFTVEILLKMTTF) threads the bilayer. Over 940-951 (GAFLHKGAFCRN) the chain is Cytoplasmic. A helical membrane pass occupies residues 952 to 970 (YFNLLDMLVVGVSLVSFGI). Over 971–976 (QSSAIS) the chain is Extracellular. The helical transmembrane segment at 977-996 (VVKILRVLRVLRPLRAINRA) threads the bilayer. Topologically, residues 997–1015 (KGLKHVVQCVFVAIRTIGN) are cytoplasmic. A helical membrane pass occupies residues 1016 to 1035 (IMIVTTLLQFMFACIGVQLF). At 1036–1125 (KGKFYRCTDE…AGPVYNHRVE (90 aa)) the chain is on the extracellular side. Residues 1073–1163 (RIWQNSDFNF…QEQGEKEYKN (91 aa)) form a dihydropyridine binding region. Glu-1099 serves as a coordination point for Ca(2+). Residues 1126–1146 (ISIFFIIYIIIVAFFMMNIFV) form a helical membrane-spanning segment. Residues 1147 to 1203 (GFVIVTFQEQGEKEYKNCELDKNQRQCVEYALKARPLRRYIPKNPYQYKFWYVVNSS) lie on the Cytoplasmic side of the membrane. The IV repeat unit spans residues 1190-1465 (NPYQYKFWYV…LFVAVIMDNF (276 aa)). The helical transmembrane segment at 1204-1222 (PFEYMMFVLIMLNTLCLAM) threads the bilayer. Topologically, residues 1223–1237 (QHYEQSKMFNDAMDI) are extracellular. Residues 1238 to 1257 (LNMVFTGVFTVEMVLKVIAF) traverse the membrane as a helical segment. The Cytoplasmic portion of the chain corresponds to 1258-1264 (KPKGYFS). The helical transmembrane segment at 1265–1286 (DAWNTFDSLIVIGSIIDVALSE) threads the bilayer. Residues 1287–1311 (ADPTESESLPLPTATPGNSEESNRI) lie on the Extracellular side of the membrane. A helical transmembrane segment spans residues 1312 to 1331 (SITFFRLFRVMRLVKLLSRG). Residues 1332–1350 (EGIRTLLWTFIKSFQALPY) lie on the Cytoplasmic side of the membrane. A helical membrane pass occupies residues 1351–1370 (VALLIAMLFFIYAVIGMQMF). Topologically, residues 1371–1437 (GKVAMRDNNQ…GEEYTCGSNF (67 aa)) are extracellular. A dihydropyridine binding region spans residues 1418–1484 (LCDPDSDYNP…LGPHHLDEFK (67 aa)). The tract at residues 1430-1473 (EYTCGSNFAIVYFISFYMLCAFLIINLFVAVIMDNFDYLTRDWS) is phenylalkylamine binding. A helical membrane pass occupies residues 1438 to 1462 (AIVYFISFYMLCAFLIINLFVAVIM). At 1463 to 1610 (DNFDYLTRDW…CFLSPSRSRS (148 aa)) the chain is on the cytoplasmic side.

Belongs to the calcium channel alpha-1 subunit (TC 1.A.1.11) family. CACNA1D subfamily. Voltage-dependent calcium channels are multisubunit complexes, consisting of alpha-1, alpha-2, beta and delta subunits in a 1:1:1:1 ratio. The channel activity is directed by the pore-forming and voltage-sensitive alpha-1 subunit. In many cases, this subunit is sufficient to generate voltage-sensitive calcium channel activity. The auxiliary subunits beta and alpha-2/delta linked by a disulfide bridge regulate the channel activity. Interacts with RIMBP2. Interacts with CABP1 and CABP4, resulting in a near elimination of calcium-dependent inactivation of the channel. As to expression, expressed in brain, heart and skeletal muscle.

The protein localises to the membrane. It carries out the reaction Ca(2+)(in) = Ca(2+)(out). Its function is as follows. Voltage-sensitive calcium channels (VSCC) mediate the entry of calcium ions into excitable cells and are also involved in a variety of calcium-dependent processes, including muscle contraction, hormone or neurotransmitter release, gene expression, cell motility, cell division and cell death. The isoform alpha-1D gives rise to L-type calcium currents. Long-lasting (L-type) calcium channels belong to the 'high-voltage activated' (HVA) group. They are blocked by dihydropyridines (DHP), phenylalkylamines, and by benzothiazepines. The polypeptide is Voltage-dependent L-type calcium channel subunit alpha-1D (CACNA1D) (Mesocricetus auratus (Golden hamster)).